Reading from the N-terminus, the 247-residue chain is Uridylate kinase (247 aa).

Position 16 to 19 (16 to 19) interacts with ATP; that stretch reads KLSG. G58 contributes to the UMP binding site. Residues G59 and R63 each coordinate ATP. UMP contacts are provided by residues D78 and 139–146; that span reads TGNPFFTT. ATP-binding residues include T166, Y172, and D175.

The protein belongs to the UMP kinase family. In terms of assembly, homohexamer.

It localises to the cytoplasm. The enzyme catalyses UMP + ATP = UDP + ADP. Its pathway is pyrimidine metabolism; CTP biosynthesis via de novo pathway; UDP from UMP (UMPK route): step 1/1. Its activity is regulated as follows. Inhibited by UTP. Functionally, catalyzes the reversible phosphorylation of UMP to UDP. The chain is Uridylate kinase from Xylella fastidiosa (strain 9a5c).